The primary structure comprises 351 residues: Photosystem II D2 protein (351 aa).

Residues 39 to 59 (TSYLSIGGWFTGTTFVTSWYT) form a helical membrane-spanning segment. His-116 provides a ligand contact to chlorophyll a. Residues 123–139 (GFCLRQFEIARLVGIRP) traverse the membrane as a helical segment. Pheophytin a is bound by residues Gln-128 and Asn-141. Residues 151-164 (IFVSVFLMYPLGQA) form a helical membrane-spanning segment. Position 196 (His-196) interacts with chlorophyll a. A helical membrane pass occupies residues 206-226 (AALLCAIHGATVQNTIFEDGD). A plastoquinone is bound by residues His-213 and Phe-260. His-213 provides a ligand contact to Fe cation. Position 267 (His-267) interacts with Fe cation. A helical transmembrane segment spans residues 277-293 (GLWTSAIGIVGLALNLR).

The protein belongs to the reaction center PufL/M/PsbA/D family. In terms of assembly, PSII is composed of 1 copy each of membrane proteins PsbA, PsbB, PsbC, PsbD, PsbE, PsbF, PsbH, PsbI, PsbJ, PsbK, PsbL, PsbM, PsbT, PsbX, PsbY, PsbZ, Psb30/Ycf12, at least 3 peripheral proteins of the oxygen-evolving complex and a large number of cofactors. It forms dimeric complexes. Requires The D1/D2 heterodimer binds P680, chlorophylls that are the primary electron donor of PSII, and subsequent electron acceptors. It shares a non-heme iron and each subunit binds pheophytin, quinone, additional chlorophylls, carotenoids and lipids. There is also a Cl(-1) ion associated with D1 and D2, which is required for oxygen evolution. The PSII complex binds additional chlorophylls, carotenoids and specific lipids. as cofactor.

It localises to the plastid. The protein localises to the chloroplast thylakoid membrane. It carries out the reaction 2 a plastoquinone + 4 hnu + 2 H2O = 2 a plastoquinol + O2. Its function is as follows. Photosystem II (PSII) is a light-driven water:plastoquinone oxidoreductase that uses light energy to abstract electrons from H(2)O, generating O(2) and a proton gradient subsequently used for ATP formation. It consists of a core antenna complex that captures photons, and an electron transfer chain that converts photonic excitation into a charge separation. The D1/D2 (PsbA/PsbD) reaction center heterodimer binds P680, the primary electron donor of PSII as well as several subsequent electron acceptors. D2 is needed for assembly of a stable PSII complex. The chain is Photosystem II D2 protein from Guillardia theta (Cryptophyte).